The following is a 332-amino-acid chain: UPF0194 membrane protein YbhG (332 aa).

An N-terminal signal peptide occupies residues 1-16 (MMKKPVVIGLAVVVLA). Residues 141-210 (RTISANDLEN…NLQDSTLIAP (70 aa)) adopt a coiled-coil conformation.

It belongs to the UPF0194 family.

Its subcellular location is the periplasm. This Shigella flexneri protein is UPF0194 membrane protein YbhG (ybhG).